Here is a 506-residue protein sequence, read N- to C-terminus: uncharacterized protein (506 aa).

The protein to group II intron maturases.

The protein localises to the plastid. It localises to the chloroplast. This is an uncharacterized protein from Euglena gracilis.